Consider the following 322-residue polypeptide: Phosphatidylserine decarboxylase proenzyme (322 aa).

Catalysis depends on charge relay system; for autoendoproteolytic cleavage activity residues D90, H147, and S254. Catalysis depends on S254, which acts as the Schiff-base intermediate with substrate; via pyruvic acid; for decarboxylase activity. Pyruvic acid (Ser); by autocatalysis is present on S254. The tract at residues 294–322 (EVEPAPLPADEIKAEHDASPLVDNKKDDT) is disordered. Residues 303–322 (DEIKAEHDASPLVDNKKDDT) are compositionally biased toward basic and acidic residues.

It belongs to the phosphatidylserine decarboxylase family. PSD-B subfamily. Prokaryotic type I sub-subfamily. In terms of assembly, heterodimer of a large membrane-associated beta subunit and a small pyruvoyl-containing alpha subunit. Pyruvate serves as cofactor. In terms of processing, is synthesized initially as an inactive proenzyme. Formation of the active enzyme involves a self-maturation process in which the active site pyruvoyl group is generated from an internal serine residue via an autocatalytic post-translational modification. Two non-identical subunits are generated from the proenzyme in this reaction, and the pyruvate is formed at the N-terminus of the alpha chain, which is derived from the carboxyl end of the proenzyme. The autoendoproteolytic cleavage occurs by a canonical serine protease mechanism, in which the side chain hydroxyl group of the serine supplies its oxygen atom to form the C-terminus of the beta chain, while the remainder of the serine residue undergoes an oxidative deamination to produce ammonia and the pyruvoyl prosthetic group on the alpha chain. During this reaction, the Ser that is part of the protease active site of the proenzyme becomes the pyruvoyl prosthetic group, which constitutes an essential element of the active site of the mature decarboxylase.

The protein localises to the cell membrane. The catalysed reaction is a 1,2-diacyl-sn-glycero-3-phospho-L-serine + H(+) = a 1,2-diacyl-sn-glycero-3-phosphoethanolamine + CO2. The protein operates within phospholipid metabolism; phosphatidylethanolamine biosynthesis; phosphatidylethanolamine from CDP-diacylglycerol: step 2/2. Catalyzes the formation of phosphatidylethanolamine (PtdEtn) from phosphatidylserine (PtdSer). The sequence is that of Phosphatidylserine decarboxylase proenzyme from Salmonella paratyphi C (strain RKS4594).